The primary structure comprises 77 residues: Sec-independent protein translocase protein TatA (77 aa).

Residues 3–23 (VFGIGLPELIVILVVALLIFG) form a helical membrane-spanning segment. The tract at residues 56-77 (TAALEEEQQAKAEAESPREISP) is disordered. A compositionally biased stretch (basic and acidic residues) spans 63 to 77 (QQAKAEAESPREISP).

This sequence belongs to the TatA/E family. Forms a complex with TatC.

It localises to the cell inner membrane. In terms of biological role, part of the twin-arginine translocation (Tat) system that transports large folded proteins containing a characteristic twin-arginine motif in their signal peptide across membranes. TatA could form the protein-conducting channel of the Tat system. The sequence is that of Sec-independent protein translocase protein TatA from Thermosynechococcus vestitus (strain NIES-2133 / IAM M-273 / BP-1).